The chain runs to 215 residues: Glycerol-3-phosphate acyltransferase (215 aa).

A run of 5 helical transmembrane segments spans residues 1-21 (MAFLISALLILIGYLLGSIPT), 57-77 (IFVLTVDLAKAMLAVILVKLW), 85-105 (MIPLEWKSWLVVFAAIAAVLG), 126-146 (VLLVLNPIVALGTLGSFLAML), and 165-185 (VLMFGLHQPLPYCLFGVIVGL).

The protein belongs to the PlsY family. Probably interacts with PlsX.

The protein resides in the cell inner membrane. It catalyses the reaction an acyl phosphate + sn-glycerol 3-phosphate = a 1-acyl-sn-glycero-3-phosphate + phosphate. Its pathway is lipid metabolism; phospholipid metabolism. In terms of biological role, catalyzes the transfer of an acyl group from acyl-phosphate (acyl-PO(4)) to glycerol-3-phosphate (G3P) to form lysophosphatidic acid (LPA). This enzyme utilizes acyl-phosphate as fatty acyl donor, but not acyl-CoA or acyl-ACP. This Crocosphaera subtropica (strain ATCC 51142 / BH68) (Cyanothece sp. (strain ATCC 51142)) protein is Glycerol-3-phosphate acyltransferase.